Consider the following 141-residue polypeptide: MAKKVLKVVKIQLPAGKANPAPPVGTVLGPTGVNIMMVCKEYNALTQGQAGMIIPAEITIYEDRSFSMKIKTAPVAELLKREAGISKGSGEPNKSKIGSITEEKLREIAEYKFPDMNAASVEAAMRTIEGTARSMGITVQK.

The protein belongs to the universal ribosomal protein uL11 family. As to quaternary structure, part of the ribosomal stalk of the 50S ribosomal subunit. Interacts with L10 and the large rRNA to form the base of the stalk. L10 forms an elongated spine to which L12 dimers bind in a sequential fashion forming a multimeric L10(L12)X complex. One or more lysine residues are methylated.

Forms part of the ribosomal stalk which helps the ribosome interact with GTP-bound translation factors. The chain is Large ribosomal subunit protein uL11B/uL11C from Bacillus cereus (strain ATCC 14579 / DSM 31 / CCUG 7414 / JCM 2152 / NBRC 15305 / NCIMB 9373 / NCTC 2599 / NRRL B-3711).